Reading from the N-terminus, the 243-residue chain is Carboxy-S-adenosyl-L-methionine synthase (243 aa).

S-adenosyl-L-methionine-binding positions include Y35, 68 to 70, 92 to 93, and R199; these read GCS and DN.

It belongs to the class I-like SAM-binding methyltransferase superfamily. Cx-SAM synthase family. In terms of assembly, homodimer.

The catalysed reaction is prephenate + S-adenosyl-L-methionine = carboxy-S-adenosyl-L-methionine + 3-phenylpyruvate + H2O. In terms of biological role, catalyzes the conversion of S-adenosyl-L-methionine (SAM) to carboxy-S-adenosyl-L-methionine (Cx-SAM). This chain is Carboxy-S-adenosyl-L-methionine synthase, found in Helicobacter pylori (strain P12).